A 75-amino-acid chain; its full sequence is RNA-binding protein KhpA (75 aa).

The KH domain maps to K29–M75.

Belongs to the KhpA RNA-binding protein family. In terms of assembly, forms a complex with KhpB.

The protein resides in the cytoplasm. Its function is as follows. A probable RNA chaperone. Forms a complex with KhpB which binds to cellular RNA and controls its expression. Plays a role in peptidoglycan (PG) homeostasis and cell length regulation. This chain is RNA-binding protein KhpA, found in Oceanobacillus iheyensis (strain DSM 14371 / CIP 107618 / JCM 11309 / KCTC 3954 / HTE831).